A 600-amino-acid polypeptide reads, in one-letter code: Mediator of RNA polymerase II transcription subunit 26 (600 aa).

The TFIIS N-terminal domain maps to 10 to 87 (QIRDRLLQAI…RSWQKLIEPA (78 aa)). Disordered stretches follow at residues 99–330 (GATG…RRLE), 348–402 (HQRL…PRDY), and 431–461 (TRQIKPLTQKEPVRADSPVHMEQQSRTELDK). The segment covering 123–133 (SIHDLKSRNDL) has biased composition (basic and acidic residues). Over residues 175-197 (PNSSPLPTNGISGSPESFASSLD) the composition is skewed to polar residues. A compositionally biased stretch (basic and acidic residues) spans 207-218 (SRLERDENDKHS). Residues 314–324 (SPLPLAQPSTP) are compositionally biased toward pro residues. Basic and acidic residues predominate over residues 441 to 461 (EPVRADSPVHMEQQSRTELDK). Phosphoserine is present on residues Ser447, Ser470, and Ser535.

It belongs to the Mediator complex subunit 26 family. Component of the Mediator complex, which is composed of MED1, MED4, MED6, MED7, MED8, MED9, MED10, MED11, MED12, MED13, MED13L, MED14, MED15, MED16, MED17, MED18, MED19, MED20, MED21, MED22, MED23, MED24, MED25, MED26, MED27, MED29, MED30, MED31, CCNC, CDK8 and CDC2L6/CDK11. The MED12, MED13, CCNC and CDK8 subunits form a distinct module termed the CDK8 module. Mediator containing the CDK8 module is less active than Mediator lacking this module in supporting transcriptional activation. Individual preparations of the Mediator complex lacking one or more distinct subunits have been variously termed ARC, CRSP, DRIP, PC2, SMCC and TRAP. Interacts with CEBPB (when not methylated).

The protein resides in the nucleus. Functionally, component of the Mediator complex, a coactivator involved in the regulated transcription of nearly all RNA polymerase II-dependent genes. Mediator functions as a bridge to convey information from gene-specific regulatory proteins to the basal RNA polymerase II transcription machinery. Mediator is recruited to promoters by direct interactions with regulatory proteins and serves as a scaffold for the assembly of a functional pre-initiation complex with RNA polymerase II and the general transcription factors. This chain is Mediator of RNA polymerase II transcription subunit 26 (MED26), found in Homo sapiens (Human).